A 132-amino-acid polypeptide reads, in one-letter code: ATP synthase epsilon chain (132 aa).

It belongs to the ATPase epsilon chain family. As to quaternary structure, F-type ATPases have 2 components, CF(1) - the catalytic core - and CF(0) - the membrane proton channel. CF(1) has five subunits: alpha(3), beta(3), gamma(1), delta(1), epsilon(1). CF(0) has three main subunits: a, b and c.

The protein localises to the cell membrane. Produces ATP from ADP in the presence of a proton gradient across the membrane. This is ATP synthase epsilon chain (atpC) from Geobacillus stearothermophilus (Bacillus stearothermophilus).